The chain runs to 20 residues: Succinate--CoA ligase [ADP-forming] subunit beta, mitochondrial (20 aa).

Positions 8 to 20 constitute an ATP-grasp domain; that stretch reads SMELLQEAGVSIP.

This sequence belongs to the succinate/malate CoA ligase beta subunit family. ATP-specific subunit beta subfamily. In terms of assembly, heterodimer of an alpha and a beta subunit. The beta subunit determines specificity for ATP. Interacts with ALAS2.

The protein localises to the mitochondrion. It carries out the reaction succinate + ATP + CoA = succinyl-CoA + ADP + phosphate. It participates in carbohydrate metabolism; tricarboxylic acid cycle; succinate from succinyl-CoA (ligase route): step 1/1. Functionally, ATP-specific succinyl-CoA synthetase functions in the citric acid cycle (TCA), coupling the hydrolysis of succinyl-CoA to the synthesis of ATP and thus represents the only step of substrate-level phosphorylation in the TCA. The beta subunit provides nucleotide specificity of the enzyme and binds the substrate succinate, while the binding sites for coenzyme A and phosphate are found in the alpha subunit. This chain is Succinate--CoA ligase [ADP-forming] subunit beta, mitochondrial, found in Canis lupus familiaris (Dog).